A 159-amino-acid chain; its full sequence is Ribosomal RNA large subunit methyltransferase H (159 aa).

Residues L76, G108, and 127–132 (FSKMTF) contribute to the S-adenosyl-L-methionine site.

The protein belongs to the RNA methyltransferase RlmH family. In terms of assembly, homodimer.

It localises to the cytoplasm. It catalyses the reaction pseudouridine(1915) in 23S rRNA + S-adenosyl-L-methionine = N(3)-methylpseudouridine(1915) in 23S rRNA + S-adenosyl-L-homocysteine + H(+). Its function is as follows. Specifically methylates the pseudouridine at position 1915 (m3Psi1915) in 23S rRNA. In Bacillus subtilis (strain 168), this protein is Ribosomal RNA large subunit methyltransferase H.